The chain runs to 456 residues: Trigger factor (456 aa).

The region spanning 192-277 (GDTVVIDFVG…IHEVKTKEVP (86 aa)) is the PPIase FKBP-type domain.

This sequence belongs to the FKBP-type PPIase family. Tig subfamily.

The protein localises to the cytoplasm. It catalyses the reaction [protein]-peptidylproline (omega=180) = [protein]-peptidylproline (omega=0). In terms of biological role, involved in protein export. Acts as a chaperone by maintaining the newly synthesized protein in an open conformation. Functions as a peptidyl-prolyl cis-trans isomerase. The polypeptide is Trigger factor (Streptococcus pyogenes serotype M4 (strain MGAS10750)).